A 123-amino-acid chain; its full sequence is Protein Wnt-7a (123 aa).

The O-palmitoleoyl serine; by PORCN moiety is linked to residue serine 1. Residues 33–61 (VEPVRTHRNKRPVFLKIKKPLSYRKPMVT) form a disordered linker region. Cysteine 89 and cysteine 104 form a disulfide bridge. Residues asparagine 90 and asparagine 96 are each glycosylated (N-linked (GlcNAc...) asparagine).

Belongs to the Wnt family. In terms of assembly, forms a soluble 1:1 complex with AFM; this prevents oligomerization and is required for prolonged biological activity. The complex with AFM may represent the physiological form in body fluids. Interacts with FZD5. Interacts with PORCN. In terms of processing, palmitoleoylation is required for efficient binding to frizzled receptors. Depalmitoleoylation leads to Wnt signaling pathway inhibition.

It localises to the secreted. The protein resides in the extracellular space. The protein localises to the extracellular matrix. In terms of biological role, ligand for members of the frizzled family of seven transmembrane receptors that functions in the canonical Wnt/beta-catenin signaling pathway. Plays an important role in embryonic development, including dorsal versus ventral patterning during limb development, skeleton development and urogenital tract development. Required for central nervous system (CNS) angiogenesis and blood-brain barrier regulation. This chain is Protein Wnt-7a (WNT-7A), found in Alopias vulpinus (Common thresher shark).